The sequence spans 96 residues: Putative pterin-4-alpha-carbinolamine dehydratase (96 aa).

This sequence belongs to the pterin-4-alpha-carbinolamine dehydratase family.

It catalyses the reaction (4aS,6R)-4a-hydroxy-L-erythro-5,6,7,8-tetrahydrobiopterin = (6R)-L-erythro-6,7-dihydrobiopterin + H2O. The chain is Putative pterin-4-alpha-carbinolamine dehydratase from Metallosphaera sedula (strain ATCC 51363 / DSM 5348 / JCM 9185 / NBRC 15509 / TH2).